The following is a 942-amino-acid chain: DNA mismatch repair protein MutS (942 aa).

Position 613–620 (613–620 (GPNMAGKS)) interacts with ATP.

It belongs to the DNA mismatch repair MutS family.

In terms of biological role, this protein is involved in the repair of mismatches in DNA. It is possible that it carries out the mismatch recognition step. This protein has a weak ATPase activity. This Clostridium botulinum (strain Eklund 17B / Type B) protein is DNA mismatch repair protein MutS.